The chain runs to 733 residues: MERRSESPCLRDSPDRRSGSPDVKGPPPVKVARLEQNGSPMGARGRPNGAVAKAVGGLMIPVFCVVEQLDGSLEYDNREEHAEFVLVRKDVLFSQLVETALLALGYSHSSAAQAQGIIKLGRWNPLPLSYVTDAPDATVADMLQDVYHVVTLKIQLQSCSKLEDLPAEQWNHATVRNALKELLKEMNQSTLAKECPLSQSMISSIVNSTYYANVSATKCQEFGRWYKKYKKIKVERVERENLSDYCVLGQRPMHLPNMNQLASLGKTNEQSPHSQIHHSTPIRNQVPALQPIMSPGLLSPQLSPQLVRQQIAMAHLINQQIAVSRLLAHQHPQAINQQFLNHPPIPRAVKPEPTNSSVEVSPDIYQQVRDELKRASVSQAVFARVAFNRTQGLLSEILRKEEDPRTASQSLLVNLRAMQNFLNLPEVERDRIYQDERERSMNPNVSMVSSASSSPSSSRTPQAKTSTPTTDLPIKVDGANINITAAIYDEIQQEMKRAKVSQALFAKVAANKSQGWLCELLRWKENPSPENRTLWENLCTIRRFLNLPQHERDVIYEEESRHHHSERMQHVVQLPPEPVQVLHRQQSQPAKESSPPREEAPPPPPPTEDSCAKKPRSRTKISLEALGILQSFIHDVGLYPDQEAIHTLSAQLDLPKHTIIKFFQNQRYHVKHHGKLKEHLGSAVDVAEYKDEELLTESEENDSEEGSEEMYKVEAEEENADKSKAAPAEIDQR.

The segment at 1–47 is disordered; the sequence is MERRSESPCLRDSPDRRSGSPDVKGPPPVKVARLEQNGSPMGARGRP. Ser20 carries the phosphoserine modification. Residues Lys24 and Lys30 each participate in a glycyl lysine isopeptide (Lys-Gly) (interchain with G-Cter in SUMO2) cross-link. At Ser39 the chain carries Phosphoserine. One can recognise a CMP domain in the interval 57-158; sequence GLMIPVFCVV…VVTLKIQLQS (102 aa). Lys161 participates in a covalent cross-link: Glycyl lysine isopeptide (Lys-Gly) (interchain with G-Cter in SUMO2). The 74-residue stretch at 161 to 234 folds into the CUTL domain; sequence KLEDLPAEQW…WYKKYKKIKV (74 aa). A Glycyl lysine isopeptide (Lys-Gly) (interchain with G-Cter in SUMO) cross-link involves residue Lys233. A Glycyl lysine isopeptide (Lys-Gly) (interchain with G-Cter in SUMO); alternate cross-link involves residue Lys350. Lys350 participates in a covalent cross-link: Glycyl lysine isopeptide (Lys-Gly) (interchain with G-Cter in SUMO2); alternate. The CUT 1 DNA-binding region spans 350–437; sequence KPEPTNSSVE…ERDRIYQDER (88 aa). The interval 435-473 is disordered; that stretch reads DERERSMNPNVSMVSSASSSPSSSRTPQAKTSTPTTDLP. A compositionally biased stretch (low complexity) spans 441 to 458; that stretch reads MNPNVSMVSSASSSPSSS. Ser454 is subject to Phosphoserine. Positions 459 to 470 are enriched in polar residues; the sequence is RTPQAKTSTPTT. A Phosphothreonine modification is found at Thr467. Residues 473–560 constitute a DNA-binding region (CUT 2); that stretch reads PIKVDGANIN…ERDVIYEEES (88 aa). Lys475 participates in a covalent cross-link: Glycyl lysine isopeptide (Lys-Gly) (interchain with G-Cter in SUMO2). The segment covering 580-593 has biased composition (low complexity); the sequence is QVLHRQQSQPAKES. 2 disordered regions span residues 580–617 and 694–733; these read QVLH…KPRS and LLTE…IDQR. Ser594 carries the phosphoserine modification. The segment at residues 615 to 674 is a DNA-binding region (homeobox); that stretch reads PRSRTKISLEALGILQSFIHDVGLYPDQEAIHTLSAQLDLPKHTIIKFFQNQRYHVKHHG. Acidic residues predominate over residues 694-708; the sequence is LLTESEENDSEEGSE. Residues 709-733 show a composition bias toward basic and acidic residues; the sequence is EMYKVEAEEENADKSKAAPAEIDQR. Lys724 is covalently cross-linked (Glycyl lysine isopeptide (Lys-Gly) (interchain with G-Cter in SUMO2)).

This sequence belongs to the CUT homeobox family. In terms of assembly, interacts with ATF4 and RUNX2; resulting in enhanced DNA binding and transactivation by these transcription factors. Interacts with PIAS1. Sumoylated by PIAS1. Sumoylation promotes nuclear localization, but represses transcription factor activity. In terms of tissue distribution, high expression in adult brain, moderate expression in fetal brain, and weak expression in adult liver, kidney, and spinal cord and in select brain regions, including amygdala, corpus callosum, caudate nucleus, and hippocampus.

The protein resides in the nucleus matrix. Its function is as follows. Binds to DNA, at nuclear matrix- or scaffold-associated regions. Thought to recognize the sugar-phosphate structure of double-stranded DNA. Transcription factor controlling nuclear gene expression, by binding to matrix attachment regions (MARs) of DNA and inducing a local chromatin-loop remodeling. Acts as a docking site for several chromatin remodeling enzymes and also by recruiting corepressors (HDACs) or coactivators (HATs) directly to promoters and enhancers. Required for the initiation of the upper-layer neurons (UL1) specific genetic program and for the inactivation of deep-layer neurons (DL) and UL2 specific genes, probably by modulating BCL11B expression. Repressor of Ctip2 and regulatory determinant of corticocortical connections in the developing cerebral cortex. May play an important role in palate formation. Acts as a molecular node in a transcriptional network regulating skeletal development and osteoblast differentiation. The protein is DNA-binding protein SATB2 (SATB2) of Homo sapiens (Human).